We begin with the raw amino-acid sequence, 221 residues long: CDP-diacylglycerol--glycerol-3-phosphate 3-phosphatidyltransferase (221 aa).

The next 5 membrane-spanning stretches (helical) occupy residues 8–28 (ILTV…LYFH), 34–54 (WFAL…GYLA), 75–95 (MVVI…WLIL), 133–153 (AQMV…LEGI), and 187–207 (ATWL…ITGW).

This sequence belongs to the CDP-alcohol phosphatidyltransferase class-I family.

The protein resides in the cell membrane. The catalysed reaction is a CDP-1,2-diacyl-sn-glycerol + sn-glycerol 3-phosphate = a 1,2-diacyl-sn-glycero-3-phospho-(1'-sn-glycero-3'-phosphate) + CMP + H(+). The protein operates within phospholipid metabolism; phosphatidylglycerol biosynthesis; phosphatidylglycerol from CDP-diacylglycerol: step 1/2. In terms of biological role, this protein catalyzes the committed step to the synthesis of the acidic phospholipids. The chain is CDP-diacylglycerol--glycerol-3-phosphate 3-phosphatidyltransferase (pgsA) from Cereibacter sphaeroides (strain ATCC 17023 / DSM 158 / JCM 6121 / CCUG 31486 / LMG 2827 / NBRC 12203 / NCIMB 8253 / ATH 2.4.1.) (Rhodobacter sphaeroides).